The chain runs to 98 residues: Biogenesis of lysosome-related organelles complex 1 subunit SNN1 (98 aa).

A coiled-coil region spans residues 55–98; it reads MDEQELLQEEGSLKEELARVNQLKKRLDKLTELYAELARKCGAL.

The protein belongs to the SNAPIN family. In terms of assembly, component of the biogenesis of lysosome-related organelles complex-1 (BLOC-1).

It localises to the endosome. Its function is as follows. Component of the biogenesis of lysosome-related organelles complex-1 (BLOC-1), a complex involved in endosomal cargo sorting. This Eremothecium gossypii (strain ATCC 10895 / CBS 109.51 / FGSC 9923 / NRRL Y-1056) (Yeast) protein is Biogenesis of lysosome-related organelles complex 1 subunit SNN1 (SNN1).